The sequence spans 278 residues: Polyamine aminopropyltransferase (278 aa).

In terms of domain architecture, PABS spans 5 to 238; the sequence is ELWFTEQQTP…GLWSFTMGSK (234 aa). An S-methyl-5'-thioadenosine-binding site is contributed by Gln-34. Spermidine-binding residues include His-65 and Asp-89. S-methyl-5'-thioadenosine is bound by residues Glu-109 and 140–141; that span reads DG. Asp-158 acts as the Proton acceptor in catalysis. 158 to 161 lines the spermidine pocket; it reads DSTD. S-methyl-5'-thioadenosine is bound at residue Pro-165.

It belongs to the spermidine/spermine synthase family. As to quaternary structure, homodimer or homotetramer.

The protein resides in the cytoplasm. It catalyses the reaction S-adenosyl 3-(methylsulfanyl)propylamine + putrescine = S-methyl-5'-thioadenosine + spermidine + H(+). It participates in amine and polyamine biosynthesis; spermidine biosynthesis; spermidine from putrescine: step 1/1. Its function is as follows. Catalyzes the irreversible transfer of a propylamine group from the amino donor S-adenosylmethioninamine (decarboxy-AdoMet) to putrescine (1,4-diaminobutane) to yield spermidine. This chain is Polyamine aminopropyltransferase, found in Caldicellulosiruptor saccharolyticus (strain ATCC 43494 / DSM 8903 / Tp8T 6331).